A 231-amino-acid chain; its full sequence is Lipoprotein-releasing system ATP-binding protein LolD (231 aa).

The 221-residue stretch at 11 to 231 folds into the ABC transporter domain; the sequence is LQAEHLGKVY…HMENGRLQPD (221 aa). 47-54 is a binding site for ATP; that stretch reads GASGSGKS.

This sequence belongs to the ABC transporter superfamily. Lipoprotein translocase (TC 3.A.1.125) family. As to quaternary structure, the complex is composed of two ATP-binding proteins (LolD) and two transmembrane proteins (LolC and LolE).

The protein localises to the cell inner membrane. Functionally, part of the ABC transporter complex LolCDE involved in the translocation of mature outer membrane-directed lipoproteins, from the inner membrane to the periplasmic chaperone, LolA. Responsible for the formation of the LolA-lipoprotein complex in an ATP-dependent manner. The polypeptide is Lipoprotein-releasing system ATP-binding protein LolD (Bordetella bronchiseptica (strain ATCC BAA-588 / NCTC 13252 / RB50) (Alcaligenes bronchisepticus)).